The following is a 375-amino-acid chain: Chaperone protein DnaJ (375 aa).

The J domain maps to Asp5 to Gly70. The segment at Gly136–Glu214 adopts a CR-type zinc-finger fold. 8 residues coordinate Zn(2+): Cys149, Cys152, Cys166, Cys169, Cys188, Cys191, Cys202, and Cys205. CXXCXGXG motif repeat units follow at residues Cys149–Gly156, Cys166–Gly173, Cys188–Gly195, and Cys202–Gly209.

It belongs to the DnaJ family. In terms of assembly, homodimer. It depends on Zn(2+) as a cofactor.

The protein resides in the cytoplasm. Its function is as follows. Participates actively in the response to hyperosmotic and heat shock by preventing the aggregation of stress-denatured proteins and by disaggregating proteins, also in an autonomous, DnaK-independent fashion. Unfolded proteins bind initially to DnaJ; upon interaction with the DnaJ-bound protein, DnaK hydrolyzes its bound ATP, resulting in the formation of a stable complex. GrpE releases ADP from DnaK; ATP binding to DnaK triggers the release of the substrate protein, thus completing the reaction cycle. Several rounds of ATP-dependent interactions between DnaJ, DnaK and GrpE are required for fully efficient folding. Also involved, together with DnaK and GrpE, in the DNA replication of plasmids through activation of initiation proteins. The chain is Chaperone protein DnaJ from Rhizobium etli (strain CIAT 652).